The sequence spans 104 residues: UPF0145 protein RD1_2695 (104 aa).

The protein belongs to the UPF0145 family.

In Roseobacter denitrificans (strain ATCC 33942 / OCh 114) (Erythrobacter sp. (strain OCh 114)), this protein is UPF0145 protein RD1_2695.